Consider the following 141-residue polypeptide: Large ribosomal subunit protein uL11 (141 aa).

Belongs to the universal ribosomal protein uL11 family. Part of the ribosomal stalk of the 50S ribosomal subunit. Interacts with L10 and the large rRNA to form the base of the stalk. L10 forms an elongated spine to which L12 dimers bind in a sequential fashion forming a multimeric L10(L12)X complex.

In terms of biological role, forms part of the ribosomal stalk which helps the ribosome interact with GTP-bound translation factors. The chain is Large ribosomal subunit protein uL11 from Acidianus ambivalens (Desulfurolobus ambivalens).